A 105-amino-acid polypeptide reads, in one-letter code: Delta-hexatoxin-Mg1a (105 aa).

An N-terminal signal peptide occupies residues 1–18 (MKTLVIACVALVLVVVHG). A propeptide spanning residues 19-60 (EVIEEVNEKQLQESVEEKYSLLQRLEKLDEAITAEENRNSRV) is cleaved from the precursor. Intrachain disulfides connect cysteine 63–cysteine 77, cysteine 70–cysteine 82, cysteine 76–cysteine 93, and cysteine 78–cysteine 105.

Belongs to the neurotoxin 06 (delta-actx) family. In terms of tissue distribution, expressed by the venom gland.

The protein resides in the secreted. Its function is as follows. Selectively slows channel inactivation of mammalian Nav1.1/SCN1A, Nav1.3/SCN3A, and Nav1.6/SCN8A and shows higher affinity for insect Nav1/para channels (site 3). Induces tonic repetitive firing of nerve impulses in insect neurons accompanied by plateau potentials. In Macrothele gigas (Japanese funnel web spider), this protein is Delta-hexatoxin-Mg1a.